The chain runs to 349 residues: MHPEKIALTQTVQKGGCAAKVAATTLHRILQQVRFPAAHSALMVDGRYFDDAAIYKINEQTALVQTLDFFTPIVDTPRLFGEIAAANAISDVYAMGGRPVTAMGILAFPLATLSEHIIVDVLQGASDKIAEAGANFVGGHSIDDDTLKFGLSVTGLVNPQQVWTNANAQSGDHLVLTKALGTGTLTAGIKRQQLQEKDIMDALESMAAINNVIDYLSPDLLAAIHAATDITGFGFSGHAMQLANASNVTLSIATGNLPRFDKAFYCLKNSFLTKAHRTNAEYTTPHIDDAKLDALYKLLIHDPQTSGGLLLSVVPEASQLVLQALRTYFKPAAIVGTVHPRQDKAVQFE.

Cys17 is an active-site residue. ATP-binding positions include Lys20 and 48–50; that span reads YFD. A Mg(2+)-binding site is contributed by Asp51. Residues Asp68, Asp91, and 139 to 141 each bind ATP; that span reads GHS. Residue Asp91 coordinates Mg(2+). Mg(2+) is bound at residue Asp229.

The protein belongs to the selenophosphate synthase 1 family. Class I subfamily. As to quaternary structure, homodimer. It depends on Mg(2+) as a cofactor.

The enzyme catalyses hydrogenselenide + ATP + H2O = selenophosphate + AMP + phosphate + 2 H(+). Functionally, synthesizes selenophosphate from selenide and ATP. This Nitrosomonas eutropha (strain DSM 101675 / C91 / Nm57) protein is Selenide, water dikinase.